The following is a 238-amino-acid chain: MPNLHSLPLGTRPENAIRNNGPDNLVLERAKLRELAEGWPCYRDACEWENFESIFHPDAVVYTTWSGRVGYKDFIAGSKAGMDNGAFIMHRCHGATTDITADATRAVTKLKATITQRFVIDGIEVDAEADCRFCFFFEKADVDGKGPRWGARFVRHWYEKDKLLPVVPGRFPKIDVDKLNSYPEGYKCLVYCQELTMGVKVLQDMPGHRRHAGTLSGEKHDLLYRLAKDWLDGKEIDV.

The tract at residues 1-20 (MPNLHSLPLGTRPENAIRNN) is disordered.

The protein belongs to the PEP2 family.

This is an uncharacterized protein from Emericella nidulans (strain FGSC A4 / ATCC 38163 / CBS 112.46 / NRRL 194 / M139) (Aspergillus nidulans).